A 153-amino-acid polypeptide reads, in one-letter code: Interleukin-4 (153 aa).

The first 24 residues, 1–24 (MGLTSQLLPPLFFLLACAGNFVHG), serve as a signal peptide directing secretion. Cystine bridges form between C27–C151, C48–C89, and C70–C123. The N-linked (GlcNAc...) asparagine glycan is linked to N62.

This sequence belongs to the IL-4/IL-13 family.

It is found in the secreted. Functionally, participates in at least several B-cell activation processes as well as of other cell types. It is a costimulator of DNA-synthesis. It induces the expression of class II MHC molecules on resting B-cells. It enhances both secretion and cell surface expression of IgE and IgG1. It also regulates the expression of the low affinity Fc receptor for IgE (CD23) on both lymphocytes and monocytes. Positively regulates IL31RA expression in macrophages. Stimulates autophagy in dendritic cells by interfering with mTORC1 signaling and through the induction of RUFY4. This is Interleukin-4 (IL4) from Macaca fascicularis (Crab-eating macaque).